Consider the following 1190-residue polypeptide: Pyruvate-flavodoxin oxidoreductase (1190 aa).

2 4Fe-4S ferredoxin-type domains span residues 687–716 and 743–773; these read EIPVWDTDVCIQCGKCVMVCPHSVIRSKVY and FTIQVAAEDCTGCGICVDVCPAKNKAQPRKK. The [4Fe-4S] cluster site is built by Cys-696, Cys-699, Cys-702, Cys-706, Cys-752, Cys-755, Cys-758, Cys-762, Cys-826, Cys-829, Cys-854, and Cys-1089.

The protein belongs to the pyruvate:ferredoxin/flavodoxin oxidoreductase family. [4Fe-4S] cluster serves as cofactor.

It carries out the reaction oxidized [flavodoxin] + pyruvate + CoA + 2 H(+) = reduced [flavodoxin] + acetyl-CoA + CO2. Functionally, oxidoreductase required for the transfer of electrons from pyruvate to flavodoxin, which reduces nitrogenase. The polypeptide is Pyruvate-flavodoxin oxidoreductase (nifJ) (Trichormus variabilis (strain ATCC 29413 / PCC 7937) (Anabaena variabilis)).